The primary structure comprises 397 residues: uncharacterized protein (397 aa).

A run of 9 helical transmembrane segments spans residues Met1–Val21, Val39–Phe59, Glu76–Pro96, Val103–Ala123, Ala124–Ala144, Met194–Phe214, Ala219–Leu239, Leu255–Leu275, and Gln301–Ala321.

It belongs to the TerC family.

It localises to the cell membrane. This is an uncharacterized protein from Mycobacterium bovis (strain ATCC BAA-935 / AF2122/97).